Reading from the N-terminus, the 593-residue chain is tRNA (guanine(26)-N(2))-dimethyltransferase 1 (593 aa).

The 457-residue stretch at 9–465 (TVIKEGEAEV…APMEIIWDIM (457 aa)) folds into the Trm1 methyltransferase domain. Position 36 (Arg-36) interacts with S-adenosyl-L-methionine. Residues 56–118 (AMLSKRARSS…KTAYESARRE (63 aa)) are disordered. Basic and acidic residues-rich tracts occupy residues 68 to 81 (VVEK…KEET) and 88 to 118 (DNGK…ARRE). S-adenosyl-L-methionine contacts are provided by Arg-134, Asp-152, and Val-185. Residues Cys-315, Cys-318, Cys-350, and Cys-353 each contribute to the Zn(2+) site. The segment at 546-593 (VNGHLNNNHKEAGDEEEEEEEEEPEEDIIEGEPELKRQKTTEDFASTS) is disordered. Acidic residues predominate over residues 558 to 577 (GDEEEEEEEEEPEEDIIEGE). A compositionally biased stretch (basic and acidic residues) spans 578–587 (PELKRQKTTE).

The protein belongs to the class I-like SAM-binding methyltransferase superfamily. Trm1 family.

It catalyses the reaction guanosine(26) in tRNA + 2 S-adenosyl-L-methionine = N(2)-dimethylguanosine(26) in tRNA + 2 S-adenosyl-L-homocysteine + 2 H(+). In terms of biological role, dimethylates a single guanine residue at position 26 of most tRNAs using S-adenosyl-L-methionine as donor of the methyl groups. This chain is tRNA (guanine(26)-N(2))-dimethyltransferase 1, found in Arabidopsis thaliana (Mouse-ear cress).